The sequence spans 231 residues: Phosphatidylserine decarboxylase proenzyme (231 aa).

The active-site Schiff-base intermediate with substrate; via pyruvic acid is the serine 188. Serine 188 is subject to Pyruvic acid (Ser); by autocatalysis.

Belongs to the phosphatidylserine decarboxylase family. PSD-A subfamily. Heterodimer of a large membrane-associated beta subunit and a small pyruvoyl-containing alpha subunit. The cofactor is pyruvate. Is synthesized initially as an inactive proenzyme. Formation of the active enzyme involves a self-maturation process in which the active site pyruvoyl group is generated from an internal serine residue via an autocatalytic post-translational modification. Two non-identical subunits are generated from the proenzyme in this reaction, and the pyruvate is formed at the N-terminus of the alpha chain, which is derived from the carboxyl end of the proenzyme. The post-translation cleavage follows an unusual pathway, termed non-hydrolytic serinolysis, in which the side chain hydroxyl group of the serine supplies its oxygen atom to form the C-terminus of the beta chain, while the remainder of the serine residue undergoes an oxidative deamination to produce ammonia and the pyruvoyl prosthetic group on the alpha chain.

The protein resides in the cell membrane. The enzyme catalyses a 1,2-diacyl-sn-glycero-3-phospho-L-serine + H(+) = a 1,2-diacyl-sn-glycero-3-phosphoethanolamine + CO2. It participates in phospholipid metabolism; phosphatidylethanolamine biosynthesis; phosphatidylethanolamine from CDP-diacylglycerol: step 2/2. Its function is as follows. Catalyzes the formation of phosphatidylethanolamine (PtdEtn) from phosphatidylserine (PtdSer). In Rickettsia africae (strain ESF-5), this protein is Phosphatidylserine decarboxylase proenzyme.